A 105-amino-acid chain; its full sequence is Large ribosomal subunit protein bL21 (105 aa).

This sequence belongs to the bacterial ribosomal protein bL21 family. Part of the 50S ribosomal subunit. Contacts protein L20.

Its function is as follows. This protein binds to 23S rRNA in the presence of protein L20. This is Large ribosomal subunit protein bL21 from Bacteroides fragilis (strain YCH46).